Here is a 244-residue protein sequence, read N- to C-terminus: Type III pantothenate kinase (244 aa).

Residue 9-16 (DAGNSSLK) coordinates ATP. Substrate-binding positions include tyrosine 90 and 97-100 (GVDR). Aspartate 99 serves as the catalytic Proton acceptor. Position 122 (threonine 122) interacts with ATP. Threonine 172 contributes to the substrate binding site.

It belongs to the type III pantothenate kinase family. As to quaternary structure, homodimer. Requires NH4(+) as cofactor. K(+) serves as cofactor.

It localises to the cytoplasm. The catalysed reaction is (R)-pantothenate + ATP = (R)-4'-phosphopantothenate + ADP + H(+). It functions in the pathway cofactor biosynthesis; coenzyme A biosynthesis; CoA from (R)-pantothenate: step 1/5. Catalyzes the phosphorylation of pantothenate (Pan), the first step in CoA biosynthesis. The chain is Type III pantothenate kinase from Thiobacillus denitrificans (strain ATCC 25259 / T1).